The primary structure comprises 309 residues: Homoserine kinase (309 aa).

Residue 95–105 (PHGRGLGSSSA) participates in ATP binding.

It belongs to the GHMP kinase family. Homoserine kinase subfamily.

It localises to the cytoplasm. The enzyme catalyses L-homoserine + ATP = O-phospho-L-homoserine + ADP + H(+). It functions in the pathway amino-acid biosynthesis; L-threonine biosynthesis; L-threonine from L-aspartate: step 4/5. In terms of biological role, catalyzes the ATP-dependent phosphorylation of L-homoserine to L-homoserine phosphate. The protein is Homoserine kinase of Streptomyces coelicolor (strain ATCC BAA-471 / A3(2) / M145).